A 206-amino-acid polypeptide reads, in one-letter code: Superoxide dismutase [Mn] (206 aa).

His-27, His-82, Asp-168, and His-172 together coordinate Mn(2+).

The protein belongs to the iron/manganese superoxide dismutase family. As to quaternary structure, homodimer. Requires Mn(2+) as cofactor.

The catalysed reaction is 2 superoxide + 2 H(+) = H2O2 + O2. In terms of biological role, destroys superoxide anion radicals which are normally produced within the cells and which are toxic to biological systems. The sequence is that of Superoxide dismutase [Mn] (sodA) from Salmonella typhi.